Reading from the N-terminus, the 159-residue chain is Succinate dehydrogenase [ubiquinone] cytochrome b small subunit, mitochondrial (159 aa).

Residues methionine 1–lysine 30 constitute a mitochondrion transit peptide. The Mitochondrial matrix segment spans residues isoleucine 31 to arginine 65. A helical membrane pass occupies residues isoleucine 66–glycine 82. At threonine 83–aspartate 89 the chain is on the mitochondrial intermembrane side. A helical membrane pass occupies residues alanine 90–isoleucine 109. Histidine 99 is a binding site for heme. Topologically, residues aspartate 110 to proline 122 are mitochondrial matrix. Residue tyrosine 111 participates in a ubiquinone binding. A helical membrane pass occupies residues leucine 123–tyrosine 140. Topologically, residues glutamate 141–serine 159 are mitochondrial intermembrane.

Belongs to the CybS family. As to quaternary structure, forms part of complex II containing four subunits: a flavoprotein (FP), an iron-sulfur protein (IP) and a cytochrome b composed of a large and a small subunit.

The protein resides in the mitochondrion inner membrane. It participates in carbohydrate metabolism; tricarboxylic acid cycle. In terms of biological role, membrane-anchoring subunit of succinate dehydrogenase (SDH) that is involved in complex II of the mitochondrial electron transport chain and is responsible for transferring electrons from succinate to ubiquinone (coenzyme Q). This chain is Succinate dehydrogenase [ubiquinone] cytochrome b small subunit, mitochondrial (sdh4), found in Schizosaccharomyces pombe (strain 972 / ATCC 24843) (Fission yeast).